A 619-amino-acid polypeptide reads, in one-letter code: MANDIDELIGIPFPNHSSEVLCSLNEQRHDGLLCDVLLVVQEQEYRTHRSVLAACSKYFKKLFTAGTLASQPYVYEIDFVQPEALAAILEFAYTSTLTITAGNVKHILNAARMLEIQCIVNVCLEIMEPGGDGGEEDDKEDDDDDEDDDDEEDEEEEEEEEEDDDDDTEDFADQENLPDPQDISCHQSPSKTDHLTEKAYSDTPRDFPDSFQAGSPGHLGVIRDFSIESLLRENLYPKANIPDRRPSLSPFAPDFFPHLWPGDFGAFAQLPEQPMDSGPLDLVIKNRKIKEEEKEELPPPPPPPFPNDFFKDMFPDLPGGPLGPIKAENDYGAYLNFLSATHLGGLFPPWPLVEERKLKPKASQQCPICHKVIMGAGKLPRHMRTHTGEKPYMCTICEVRFTRQDKLKIHMRKHTGERPYLCIHCNAKFVHNYDLKNHMRIHTGVRPYQCEFCYKSFTRSDHLHRHIKRQSCRMARPRRGRKPAAWRAASLLFGPGGPAPDKAAFVMPPALGEVGGHLGGAAVCLPGPSPAKHFLAAPKGALSLQELERQFEETQMKLFGRAQLEAERNAGGLLAFALAENVAAARPYFPLPDPWAAGLAGLPGLAGLNHVASMSEANN.

The BTB domain occupies C34 to A101. The interval P129–H218 is disordered. Over residues G133–D173 the composition is skewed to acidic residues. Over residues K191 to P208 the composition is skewed to basic and acidic residues. 3 consecutive C2H2-type zinc fingers follow at residues Q364 to H386, Y392 to H414, and Y420 to H442. Residues Y448–R478 form a C2H2-type 4; degenerate zinc finger.

As to expression, detected in normal cervical keratinocytes, and in some cervical carcinoma cell lines.

Its function is as follows. May be a tumor suppressor gene. The chain is Zinc finger and BTB domain-containing protein 7C (ZBTB7C) from Homo sapiens (Human).